The sequence spans 493 residues: Glutamate--tRNA ligase (493 aa).

The 'HIGH' region motif lies at 10-20 (PSPTGDPHVGT). The 'KMSKS' region motif lies at 251–255 (KLSKR). K254 is an ATP binding site.

Belongs to the class-I aminoacyl-tRNA synthetase family. Glutamate--tRNA ligase type 1 subfamily. As to quaternary structure, monomer.

The protein localises to the cytoplasm. The catalysed reaction is tRNA(Glu) + L-glutamate + ATP = L-glutamyl-tRNA(Glu) + AMP + diphosphate. Functionally, catalyzes the attachment of glutamate to tRNA(Glu) in a two-step reaction: glutamate is first activated by ATP to form Glu-AMP and then transferred to the acceptor end of tRNA(Glu). This is Glutamate--tRNA ligase from Pseudomonas fluorescens (strain Pf0-1).